A 271-amino-acid chain; its full sequence is Acetylglutamate kinase (271 aa).

Residues 41 to 42 (GG), Arg-63, and Asn-166 contribute to the substrate site.

Belongs to the acetylglutamate kinase family. ArgB subfamily.

It localises to the cytoplasm. The enzyme catalyses N-acetyl-L-glutamate + ATP = N-acetyl-L-glutamyl 5-phosphate + ADP. It functions in the pathway amino-acid biosynthesis; L-arginine biosynthesis; N(2)-acetyl-L-ornithine from L-glutamate: step 2/4. In terms of biological role, catalyzes the ATP-dependent phosphorylation of N-acetyl-L-glutamate. This chain is Acetylglutamate kinase, found in Anaeromyxobacter sp. (strain Fw109-5).